Reading from the N-terminus, the 278-residue chain is Phosphonates import ATP-binding protein PhnC (278 aa).

The ABC transporter domain occupies 25 to 273; that stretch reads LAVKGLVKAY…IIQDIYSDES (249 aa). 58-65 contacts ATP; that stretch reads GRSGAGKS.

It belongs to the ABC transporter superfamily. Phosphonates importer (TC 3.A.1.9.1) family. As to quaternary structure, the complex is composed of two ATP-binding proteins (PhnC), two transmembrane proteins (PhnE) and a solute-binding protein (PhnD).

Its subcellular location is the cell inner membrane. It catalyses the reaction phosphonate(out) + ATP + H2O = phosphonate(in) + ADP + phosphate + H(+). In terms of biological role, part of the ABC transporter complex PhnCDE involved in phosphonates import. Responsible for energy coupling to the transport system. The protein is Phosphonates import ATP-binding protein PhnC of Yersinia pestis bv. Antiqua (strain Antiqua).